We begin with the raw amino-acid sequence, 93 residues long: Large ribosomal subunit protein uL23cz/uL23cy (93 aa).

It belongs to the universal ribosomal protein uL23 family. In terms of assembly, part of the 50S ribosomal subunit.

It localises to the plastid. The protein localises to the chloroplast. Binds to 23S rRNA. This chain is Large ribosomal subunit protein uL23cz/uL23cy (rpl23-A), found in Arabidopsis thaliana (Mouse-ear cress).